A 211-amino-acid chain; its full sequence is Cytochrome c biogenesis ATP-binding export protein CcmA (211 aa).

Residues 8-210 (LEAKNLQCER…EVRRIQLGAV (203 aa)) enclose the ABC transporter domain. 40-47 (GPNGAGKT) contacts ATP.

Belongs to the ABC transporter superfamily. CcmA exporter (TC 3.A.1.107) family. The complex is composed of two ATP-binding proteins (CcmA) and two transmembrane proteins (CcmB).

The protein localises to the cell inner membrane. The enzyme catalyses heme b(in) + ATP + H2O = heme b(out) + ADP + phosphate + H(+). Its function is as follows. Part of the ABC transporter complex CcmAB involved in the biogenesis of c-type cytochromes; once thought to export heme, this seems not to be the case, but its exact role is uncertain. Responsible for energy coupling to the transport system. The chain is Cytochrome c biogenesis ATP-binding export protein CcmA from Hahella chejuensis (strain KCTC 2396).